A 359-amino-acid polypeptide reads, in one-letter code: MTLDSTMACCLSEEVKESKRINAEIEKQLRRDKKDSRRELKLLLLGTGESGKSTFIKQMRIIHGSGYSEEDKKGFTKLVFQNIFTAMQSMIRAMETLKILYKYEQNKANAQVVREVDVEKVCTFEQPYVNAIKNLWSDPGIQECYDRRREYQLSDSTKYYLTDVDRISKPGYLPTQQDVLRVRVPTTGIIEYPFDLENIIFRMVDVGGQRSERRKWIHCFENVTSIMFLVALSEYDQVLVESDNENRMEESKALFRTIITYPWFQNSSVILFLNKKDLLEDKIMYSHLVDYFPEFDGPQRDAATAREFILKMFVDLNPDSDKIIYSHFTCATDTENIRFVFAAVKDTILQHNLKEYNLV.

2 S-palmitoyl cysteine lipidation sites follow: Cys-9 and Cys-10. Residues 38 to 359 (RELKLLLLGT…QHNLKEYNLV (322 aa)) enclose the G-alpha domain. Positions 41-54 (KLLLLGTGESGKST) are G1 motif. GTP is bound by residues 46-53 (GTGESGKS) and 180-183 (LRVR). Ser-53 lines the Mg(2+) pocket. The G2 motif stretch occupies residues 178–186 (DVLRVRVPT). Residue Thr-186 coordinates Mg(2+). Residues 201–210 (FRMVDVGGQR) form a G3 motif region. Residues 270-277 (ILFLNKKD) form a G4 motif region. GTP contacts are provided by residues 274-277 (NKKD) and Ala-331. Residues 329-334 (TCATDT) are G5 motif.

The protein belongs to the G-alpha family. G(q) subfamily. In terms of assembly, g proteins are composed of 3 units; alpha, beta and gamma. The alpha chain contains the guanine nucleotide binding site.

The protein localises to the cell membrane. It localises to the cytoplasm. It catalyses the reaction GTP + H2O = GDP + phosphate + H(+). Its function is as follows. Guanine nucleotide-binding proteins (G proteins) function as transducers downstream of G protein-coupled receptors (GPCRs) in numerous signaling cascades. The alpha chain contains the guanine nucleotide binding site and alternates between an active, GTP-bound state and an inactive, GDP-bound state. Signaling by an activated GPCR promotes GDP release and GTP binding. The alpha subunit has a low GTPase activity that converts bound GTP to GDP, thereby terminating the signal. Both GDP release and GTP hydrolysis are modulated by numerous regulatory proteins. Signaling is mediated via phospholipase C-beta-dependent inositol lipid hydrolysis for signal propagation: activates phospholipase C-beta: following GPCR activation, GNA11 activates PLC-beta (PLCB1, PLCB2, PLCB3 or PLCB4), leading to production of diacylglycerol (DAG) and inositol 1,4,5-trisphosphate (IP3). The sequence is that of Guanine nucleotide-binding protein subunit alpha-11 (gna11) from Xenopus laevis (African clawed frog).